Consider the following 676-residue polypeptide: Urocanate hydratase (676 aa).

NAD(+) is bound by residues 126–127, glutamine 204, 251–253, glutamate 271, 317–318, 343–347, 354–355, and tyrosine 403; these read GG, GMS, NV, QTSCH, and YY. Position 534 is an N6-succinyllysine (lysine 534). Glycine 594 contacts NAD(+).

Belongs to the urocanase family. NAD(+) is required as a cofactor.

The catalysed reaction is 4-imidazolone-5-propanoate = trans-urocanate + H2O. Its pathway is amino-acid degradation; L-histidine degradation into L-glutamate; N-formimidoyl-L-glutamate from L-histidine: step 2/3. In Mus musculus (Mouse), this protein is Urocanate hydratase (Uroc1).